The primary structure comprises 305 residues: Ornithine carbamoyltransferase (305 aa).

Residues 52-55 (STRT), Gln79, Arg103, and 130-133 (HPLQ) each bind carbamoyl phosphate. L-ornithine-binding positions include Asn162, Asp224, and 228 to 229 (SM). Carbamoyl phosphate-binding positions include 264-265 (CL) and Arg292.

The protein belongs to the aspartate/ornithine carbamoyltransferase superfamily. OTCase family.

It localises to the cytoplasm. It carries out the reaction carbamoyl phosphate + L-ornithine = L-citrulline + phosphate + H(+). It participates in amino-acid biosynthesis; L-arginine biosynthesis; L-arginine from L-ornithine and carbamoyl phosphate: step 1/3. In terms of biological role, reversibly catalyzes the transfer of the carbamoyl group from carbamoyl phosphate (CP) to the N(epsilon) atom of ornithine (ORN) to produce L-citrulline. This Pyrobaculum islandicum (strain DSM 4184 / JCM 9189 / GEO3) protein is Ornithine carbamoyltransferase.